A 338-amino-acid chain; its full sequence is Anthranilate phosphoribosyltransferase (338 aa).

5-phospho-alpha-D-ribose 1-diphosphate is bound by residues glycine 81, 84-85 (GD), threonine 89, 91-94 (NIST), 109-117 (KHGNRNLSS), and alanine 121. Residue glycine 81 participates in anthranilate binding. Mg(2+) is bound at residue serine 93. Asparagine 112 serves as a coordination point for anthranilate. Arginine 167 serves as a coordination point for anthranilate. Positions 226 and 227 each coordinate Mg(2+).

The protein belongs to the anthranilate phosphoribosyltransferase family. In terms of assembly, homodimer. It depends on Mg(2+) as a cofactor.

The catalysed reaction is N-(5-phospho-beta-D-ribosyl)anthranilate + diphosphate = 5-phospho-alpha-D-ribose 1-diphosphate + anthranilate. Its pathway is amino-acid biosynthesis; L-tryptophan biosynthesis; L-tryptophan from chorismate: step 2/5. Its function is as follows. Catalyzes the transfer of the phosphoribosyl group of 5-phosphorylribose-1-pyrophosphate (PRPP) to anthranilate to yield N-(5'-phosphoribosyl)-anthranilate (PRA). The sequence is that of Anthranilate phosphoribosyltransferase from Cereibacter sphaeroides (strain ATCC 17025 / ATH 2.4.3) (Rhodobacter sphaeroides).